We begin with the raw amino-acid sequence, 633 residues long: Threonine--tRNA ligase (633 aa).

Residues 1–61 (MINITLPDGS…DHDASLRIIT (61 aa)) enclose the TGS domain. Positions 243-534 (DHRRIGKQQD…LIEHHAGQFP (292 aa)) are catalytic. Zn(2+) is bound by residues Cys-334, His-385, and His-511.

Belongs to the class-II aminoacyl-tRNA synthetase family. Homodimer. Requires Zn(2+) as cofactor.

The protein localises to the cytoplasm. It carries out the reaction tRNA(Thr) + L-threonine + ATP = L-threonyl-tRNA(Thr) + AMP + diphosphate + H(+). In terms of biological role, catalyzes the attachment of threonine to tRNA(Thr) in a two-step reaction: L-threonine is first activated by ATP to form Thr-AMP and then transferred to the acceptor end of tRNA(Thr). Also edits incorrectly charged L-seryl-tRNA(Thr). This chain is Threonine--tRNA ligase, found in Stenotrophomonas maltophilia (strain R551-3).